Here is a 359-residue protein sequence, read N- to C-terminus: Peptide chain release factor 1 (359 aa).

At Gln-233 the chain carries N5-methylglutamine.

This sequence belongs to the prokaryotic/mitochondrial release factor family. Methylated by PrmC. Methylation increases the termination efficiency of RF1.

The protein resides in the cytoplasm. In terms of biological role, peptide chain release factor 1 directs the termination of translation in response to the peptide chain termination codons UAG and UAA. This is Peptide chain release factor 1 from Clostridium acetobutylicum (strain ATCC 824 / DSM 792 / JCM 1419 / IAM 19013 / LMG 5710 / NBRC 13948 / NRRL B-527 / VKM B-1787 / 2291 / W).